Consider the following 382-residue polypeptide: Alkanesulfonate monooxygenase (382 aa).

Belongs to the SsuD family.

It catalyses the reaction an alkanesulfonate + FMNH2 + O2 = an aldehyde + FMN + sulfite + H2O + 2 H(+). Functionally, catalyzes the desulfonation of aliphatic sulfonates. This chain is Alkanesulfonate monooxygenase, found in Ectopseudomonas mendocina (strain ymp) (Pseudomonas mendocina).